Reading from the N-terminus, the 281-residue chain is Acetyl-coenzyme A carboxylase carboxyl transferase subunit beta (281 aa).

Residues 1 to 23 are disordered; the sequence is MAWFKREKKGISTSTEEKKEAPD. A CoA carboxyltransferase N-terminal domain is found at 25–281; that stretch reads LWNKCPNCKK…LAAFLKMMKN (257 aa). Residues C29, C32, C48, and C51 each contribute to the Zn(2+) site. The segment at 29 to 51 adopts a C4-type zinc-finger fold; it reads CPNCKKALHSADLLENKYVCQYC.

The protein belongs to the AccD/PCCB family. As to quaternary structure, acetyl-CoA carboxylase is a heterohexamer composed of biotin carboxyl carrier protein (AccB), biotin carboxylase (AccC) and two subunits each of ACCase subunit alpha (AccA) and ACCase subunit beta (AccD). Requires Zn(2+) as cofactor.

It localises to the cytoplasm. It catalyses the reaction N(6)-carboxybiotinyl-L-lysyl-[protein] + acetyl-CoA = N(6)-biotinyl-L-lysyl-[protein] + malonyl-CoA. It functions in the pathway lipid metabolism; malonyl-CoA biosynthesis; malonyl-CoA from acetyl-CoA: step 1/1. Functionally, component of the acetyl coenzyme A carboxylase (ACC) complex. Biotin carboxylase (BC) catalyzes the carboxylation of biotin on its carrier protein (BCCP) and then the CO(2) group is transferred by the transcarboxylase to acetyl-CoA to form malonyl-CoA. The protein is Acetyl-coenzyme A carboxylase carboxyl transferase subunit beta of Pedobacter heparinus (strain ATCC 13125 / DSM 2366 / CIP 104194 / JCM 7457 / NBRC 12017 / NCIMB 9290 / NRRL B-14731 / HIM 762-3).